Reading from the N-terminus, the 24-residue chain is Xenoposin precursor fragment B2 (24 aa).

In terms of tissue distribution, expressed by the skin glands.

The protein resides in the secreted. Its function is as follows. Has antimicrobial activity against Gram-negative bacterium E.coli ATCC 25922 (MIC=100 uM), Gram-positive bacterium S.auerus ATCC 25923 (MIC=25 uM). The chain is Xenoposin precursor fragment B2 from Xenopus borealis (Kenyan clawed frog).